The sequence spans 363 residues: Spindle pole body component SPC42 (363 aa).

Positions 60–137 (EFINKAVQQN…ANSTFKEMRF (78 aa)) form a coiled coil. Positions 160 to 184 (PKHRAPDATGNPRTTNKVSNTSDQD) are disordered. The span at 170 to 182 (NPRTTNKVSNTSD) shows a compositional bias: polar residues. S213, S217, S284, and S329 each carry phosphoserine. The stretch at 249-298 (DIMMYESAELKRVEEEIEELKRKILVRKKHDLRKLSLNNQLQELQSMMDG) forms a coiled coil. The tract at residues 310–363 (HNHATHRHSSQSSRDYSPSSDACLECSNDLYEKNRVKPENNMSETFATPTPNNR) is disordered. The span at 319–329 (SQSSRDYSPSS) shows a compositional bias: low complexity. Polar residues predominate over residues 349-363 (NNMSETFATPTPNNR).

This sequence belongs to the SPC42 family. In terms of assembly, component of the SPC110 complex containing at least CMD1, SPC29, SPC42 and SCP110.

It is found in the nucleus. The protein localises to the cytoplasm. The protein resides in the cytoskeleton. Its subcellular location is the microtubule organizing center. It localises to the spindle pole body. Functionally, forms a polymeric layer at the periphery of the spindle pole body (SPB) central plaque which has an essential function during SPB duplication and may facilitate attachment of the SPB to the nuclear membrane. The protein is Spindle pole body component SPC42 (SPC42) of Saccharomyces cerevisiae (strain ATCC 204508 / S288c) (Baker's yeast).